The primary structure comprises 147 residues: Ubiquitin-conjugating enzyme E2-17 kDa (147 aa).

One can recognise a UBC core domain in the interval methionine 1–methionine 147. Catalysis depends on cysteine 85, which acts as the Glycyl thioester intermediate.

This sequence belongs to the ubiquitin-conjugating enzyme family.

The catalysed reaction is S-ubiquitinyl-[E1 ubiquitin-activating enzyme]-L-cysteine + [E2 ubiquitin-conjugating enzyme]-L-cysteine = [E1 ubiquitin-activating enzyme]-L-cysteine + S-ubiquitinyl-[E2 ubiquitin-conjugating enzyme]-L-cysteine.. Its pathway is protein modification; protein ubiquitination. Catalyzes the covalent attachment of ubiquitin to other proteins. Mediates the selective degradation of short-lived and abnormal proteins. Required for proper telomere behavior during cell divisions and possibly for ubiquitination of proteins involved in postmeiotic stages of spermatogenesis. Deletion mutations are lethal in homozygotes. This Drosophila melanogaster (Fruit fly) protein is Ubiquitin-conjugating enzyme E2-17 kDa (eff).